Consider the following 856-residue polypeptide: Bifunctional uridylyltransferase/uridylyl-removing enzyme (856 aa).

The segment at 1-320 is uridylyltransferase; sequence MTLSAAPLQH…YCQVPRVTQH (320 aa). The uridylyl-removing stretch occupies residues 321–678; that stretch reads ISEYFHAVNG…ARLADDHEGL (358 aa). Residues 439–561 enclose the HD domain; it reads VDEHILMVVR…VRTPRRLAAL (123 aa). 2 ACT domains span residues 679 to 760 and 788 to 856; these read QVLI…LPPQ and ILSI…ALRI.

Belongs to the GlnD family. Requires Mg(2+) as cofactor.

It carries out the reaction [protein-PII]-L-tyrosine + UTP = [protein-PII]-uridylyl-L-tyrosine + diphosphate. It catalyses the reaction [protein-PII]-uridylyl-L-tyrosine + H2O = [protein-PII]-L-tyrosine + UMP + H(+). With respect to regulation, uridylyltransferase (UTase) activity is inhibited by glutamine, while glutamine activates uridylyl-removing (UR) activity. Functionally, modifies, by uridylylation and deuridylylation, the PII regulatory proteins (GlnB and homologs), in response to the nitrogen status of the cell that GlnD senses through the glutamine level. Under low glutamine levels, catalyzes the conversion of the PII proteins and UTP to PII-UMP and PPi, while under higher glutamine levels, GlnD hydrolyzes PII-UMP to PII and UMP (deuridylylation). Thus, controls uridylylation state and activity of the PII proteins, and plays an important role in the regulation of nitrogen assimilation and metabolism. The protein is Bifunctional uridylyltransferase/uridylyl-removing enzyme of Chromobacterium violaceum (strain ATCC 12472 / DSM 30191 / JCM 1249 / CCUG 213 / NBRC 12614 / NCIMB 9131 / NCTC 9757 / MK).